Here is a 142-residue protein sequence, read N- to C-terminus: Hemoglobin subunit alpha (142 aa).

Serine 1 carries the N-acetylserine modification. Positions 1–142 (SLSDKDKAAV…LSLALAEKYR (142 aa)) constitute a Globin domain. Positions 59 and 88 each coordinate heme b.

The protein belongs to the globin family. Heterotetramer of two alpha chains and two beta chains. As to expression, red blood cells.

Involved in oxygen transport from gills to the various peripheral tissues. This chain is Hemoglobin subunit alpha, found in Lycodes reticulatus (Arctic eelpout).